The following is a 570-amino-acid chain: Protein HEATR9 (570 aa).

This Homo sapiens (Human) protein is Protein HEATR9 (HEATR9).